We begin with the raw amino-acid sequence, 159 residues long: MAIININEVMIHLLPGQIIAGLDLGTKTIGIAVSDRGLIFSNPRSVLQRQKFTVDAQTLIKIFDHENVGVIIIGLPLNMNGSSGPRAQATRTFVRNMEAYTEIPFVFWDERLSTIAAERSLLEMDVSRAKRATRIDSAAAAFILQGALNRIHNLHHIEG.

The protein belongs to the YqgF nuclease family.

Its subcellular location is the cytoplasm. Its function is as follows. Could be a nuclease involved in processing of the 5'-end of pre-16S rRNA. The sequence is that of Putative pre-16S rRNA nuclease from Bartonella henselae (strain ATCC 49882 / DSM 28221 / CCUG 30454 / Houston 1) (Rochalimaea henselae).